The chain runs to 393 residues: 1-deoxy-D-xylulose 5-phosphate reductoisomerase (393 aa).

NADPH is bound by residues T10, G11, S12, I13, R37, Q38, and N124. K125 contacts 1-deoxy-D-xylulose 5-phosphate. E126 provides a ligand contact to NADPH. Mn(2+) is bound at residue D150. S151, E152, S179, and H202 together coordinate 1-deoxy-D-xylulose 5-phosphate. Residue E152 coordinates Mn(2+). Residue G208 coordinates NADPH. 1-deoxy-D-xylulose 5-phosphate is bound by residues S215, N220, K221, and E224. E224 provides a ligand contact to Mn(2+).

This sequence belongs to the DXR family. It depends on Mg(2+) as a cofactor. Requires Mn(2+) as cofactor.

It carries out the reaction 2-C-methyl-D-erythritol 4-phosphate + NADP(+) = 1-deoxy-D-xylulose 5-phosphate + NADPH + H(+). It participates in isoprenoid biosynthesis; isopentenyl diphosphate biosynthesis via DXP pathway; isopentenyl diphosphate from 1-deoxy-D-xylulose 5-phosphate: step 1/6. Catalyzes the NADPH-dependent rearrangement and reduction of 1-deoxy-D-xylulose-5-phosphate (DXP) to 2-C-methyl-D-erythritol 4-phosphate (MEP). In Cupriavidus taiwanensis (strain DSM 17343 / BCRC 17206 / CCUG 44338 / CIP 107171 / LMG 19424 / R1) (Ralstonia taiwanensis (strain LMG 19424)), this protein is 1-deoxy-D-xylulose 5-phosphate reductoisomerase.